The chain runs to 228 residues: Ribonuclease 3 (228 aa).

Residues 5–127 (LTALQERLKH…LIGAVYLDAG (123 aa)) form the RNase III domain. Residue Glu40 participates in Mg(2+) binding. Asp44 is a catalytic residue. Mg(2+) contacts are provided by Asp113 and Glu116. The active site involves Glu116. A DRBM domain is found at 154 to 224 (DPKTELQEWL…AAAMLIRLKA (71 aa)).

Belongs to the ribonuclease III family. As to quaternary structure, homodimer. It depends on Mg(2+) as a cofactor.

The protein localises to the cytoplasm. It catalyses the reaction Endonucleolytic cleavage to 5'-phosphomonoester.. Its function is as follows. Digests double-stranded RNA. Involved in the processing of primary rRNA transcript to yield the immediate precursors to the large and small rRNAs (23S and 16S). Processes some mRNAs, and tRNAs when they are encoded in the rRNA operon. Processes pre-crRNA and tracrRNA of type II CRISPR loci if present in the organism. The polypeptide is Ribonuclease 3 (Variovorax paradoxus (strain S110)).